Consider the following 318-residue polypeptide: MSADEVNIDTASLEELRDILINKTGNTKLANRFRALFNLKSVGSEDSDKERAHKAIKYIAECFNDDSELLKHEVAYVLGQTKDLYAAPYLREVLENDNQQCMVRHEAAEALGALGDKESLPLLEKYFKEDPLLEIRQTCELAIERIHWENSEKAKNEVLEKSLYTSIDPAPPLATNDSTSKVEKLKEILNDQDKPLFERYRAMFRLRDIGTDEACLALASGFDDPSALFKHEIAYVFGQMCNPVTVPSLIKVLKDESEAGMVRHEAAEALGSIATDECLPVLQSFLNDSEPVVRDSAIVALDMYEYENSNELEYATVK.

HEAT-like PBS-type repeat units lie at residues 70-96 and 103-129; these read LKHE…VLEN and VRHE…YFKE. His-72, Glu-73, His-105, Glu-106, His-231, Glu-232, His-264, and Glu-265 together coordinate Fe cation. An HEAT-like PBS-type 3 repeat occupies 262 to 288; the sequence is VRHEAAEALGSIATDECLPVLQSFLND.

Belongs to the deoxyhypusine hydroxylase family. Fe(2+) is required as a cofactor.

It is found in the cytoplasm. It localises to the nucleus. It carries out the reaction [eIF5A protein]-deoxyhypusine + AH2 + O2 = [eIF5A protein]-hypusine + A + H2O. It functions in the pathway protein modification; eIF5A hypusination. Catalyzes the hydroxylation of the N(6)-(4-aminobutyl)-L-lysine intermediate to form hypusine, an essential post-translational modification only found in mature eIF-5A factor. The protein is Deoxyhypusine hydroxylase of Candida albicans (strain SC5314 / ATCC MYA-2876) (Yeast).